Reading from the N-terminus, the 362-residue chain is Putative HLA class I histocompatibility antigen, alpha chain H (362 aa).

A signal peptide spans 1-24 (MVLMAPRTLLLLLSGALALTQTWA). The segment at 25–114 (RSHSMRYFYT…ALRYYNQSEG (90 aa)) is alpha-1. Residues 25–308 (RSHSMRYFYT…EPSSQPTVPI (284 aa)) lie on the Extracellular side of the membrane. Asn110 carries an N-linked (GlcNAc...) asparagine glycan. The tract at residues 115 to 206 (GSHTMQVMYG…ENGKETLQRA (92 aa)) is alpha-2. An alpha-3 region spans residues 207–298 (DPPKTHMTHH…GLPEPLTLRW (92 aa)). One can recognise an Ig-like C1-type domain in the interval 209 to 297 (PKTHMTHHPI…EGLPEPLTLR (89 aa)). A disulfide bridge links Cys227 with Cys283. The connecting peptide stretch occupies residues 299 to 308 (EPSSQPTVPI). A helical transmembrane segment spans residues 309–332 (VGIVAGLVLLVAVVTGAVVAAVMW). Residues 333–362 (RKKSSDRKGGSYSQAASSNSAQGSDVSLTA) lie on the Cytoplasmic side of the membrane. A disordered region spans residues 337–362 (SDRKGGSYSQAASSNSAQGSDVSLTA). The segment covering 342-356 (GSYSQAASSNSAQGS) has biased composition (low complexity).

Belongs to the MHC class I family. Heterodimer of an alpha chain and a beta chain (beta-2-microglobulin).

It localises to the cell membrane. Involved in the presentation of foreign antigens to the immune system. In Homo sapiens (Human), this protein is Putative HLA class I histocompatibility antigen, alpha chain H (HLA-H).